Reading from the N-terminus, the 280-residue chain is Adenosylcobinamide-GDP ribazoletransferase (280 aa).

6 helical membrane passes run 44 to 64, 69 to 89, 111 to 131, 135 to 155, 189 to 209, and 226 to 246; these read GVGV…LFVL, STPL…TGAF, LVIM…MLAL, VALL…ALFV, ISVA…ALVI, and ALLQ…AVMA.

Belongs to the CobS family. Mg(2+) serves as cofactor.

It localises to the cell inner membrane. It catalyses the reaction alpha-ribazole + adenosylcob(III)inamide-GDP = adenosylcob(III)alamin + GMP + H(+). It carries out the reaction alpha-ribazole 5'-phosphate + adenosylcob(III)inamide-GDP = adenosylcob(III)alamin 5'-phosphate + GMP + H(+). It participates in cofactor biosynthesis; adenosylcobalamin biosynthesis; adenosylcobalamin from cob(II)yrinate a,c-diamide: step 7/7. Joins adenosylcobinamide-GDP and alpha-ribazole to generate adenosylcobalamin (Ado-cobalamin). Also synthesizes adenosylcobalamin 5'-phosphate from adenosylcobinamide-GDP and alpha-ribazole 5'-phosphate. The sequence is that of Adenosylcobinamide-GDP ribazoletransferase from Albidiferax ferrireducens (strain ATCC BAA-621 / DSM 15236 / T118) (Rhodoferax ferrireducens).